We begin with the raw amino-acid sequence, 429 residues long: Enolase (429 aa).

A (2R)-2-phosphoglycerate-binding site is contributed by Q163. The Proton donor role is filled by E205. Positions 242, 287, and 314 each coordinate Mg(2+). Positions 339, 368, 369, and 390 each coordinate (2R)-2-phosphoglycerate. Catalysis depends on K339, which acts as the Proton acceptor.

It belongs to the enolase family. Requires Mg(2+) as cofactor.

It localises to the cytoplasm. It is found in the secreted. The protein resides in the cell surface. It catalyses the reaction (2R)-2-phosphoglycerate = phosphoenolpyruvate + H2O. It participates in carbohydrate degradation; glycolysis; pyruvate from D-glyceraldehyde 3-phosphate: step 4/5. Its function is as follows. Catalyzes the reversible conversion of 2-phosphoglycerate (2-PG) into phosphoenolpyruvate (PEP). It is essential for the degradation of carbohydrates via glycolysis. In Magnetococcus marinus (strain ATCC BAA-1437 / JCM 17883 / MC-1), this protein is Enolase.